The chain runs to 236 residues: Phosphoribosylaminoimidazole-succinocarboxamide synthase (236 aa).

The protein belongs to the SAICAR synthetase family.

The catalysed reaction is 5-amino-1-(5-phospho-D-ribosyl)imidazole-4-carboxylate + L-aspartate + ATP = (2S)-2-[5-amino-1-(5-phospho-beta-D-ribosyl)imidazole-4-carboxamido]succinate + ADP + phosphate + 2 H(+). The protein operates within purine metabolism; IMP biosynthesis via de novo pathway; 5-amino-1-(5-phospho-D-ribosyl)imidazole-4-carboxamide from 5-amino-1-(5-phospho-D-ribosyl)imidazole-4-carboxylate: step 1/2. This is Phosphoribosylaminoimidazole-succinocarboxamide synthase from Lysinibacillus sphaericus (strain C3-41).